The primary structure comprises 421 residues: MGFTTGREFHPALRMRAKYNAKYLGTKSEREKYFHLAYNKHTQFLRYQEQIMSKTKEKKVGVIFGKFYPVHTGHINMIYEAFSKVDELHVIVCSDTVRDLKLFYDSKMKRMPTVQDRLRWMQQIFKYQKNQIFIHHLVEDGIPSYPNGWQSWSEAVKTLFHEKHFEPSIVFSSEPQDKAPYEKYLGLEVSLVDPDRTFFNVSATKIRTTPFQYWKFIPKEARPFFAKTVAILGGESSGKSVLVNKLAAVFNTTSAWEYGREFVFEKLGGDEQAMQYSDYPQMALGHQRYIDYAVRHSHKIAFIDTDFITTQAFCIQYEGKAHPFLDSMIKEYPFDVTILLKNNTEWVDDGLRSLGSQKQRQQFQQLLKKLLDKYKVPYIEIESPSYLDRYNQVKAVIEKVLNEEEISELQNTTFPIKGTSQ.

The interval 57-224 is nicotinamide mononucleotide adenylyltransferase; that stretch reads EKKVGVIFGK…KFIPKEARPF (168 aa). NAD(+)-binding positions include 64–67, H71, R98, 139–152, 172–174, 199–201, 254–256, and 289–292; these read FGKF, EDGI…WQSW, SSE, FNV, SAW, and YIDY. The interval 225–421 is ribosylnicotinamide kinase; that stretch reads FAKTVAILGG…TTFPIKGTSQ (197 aa).

This sequence in the N-terminal section; belongs to the bacterial NMN adenylyltransferase family. It in the C-terminal section; belongs to the bacterial RNK family. Homotetramer.

The protein localises to the cell membrane. It localises to the cytoplasm. It carries out the reaction beta-nicotinamide D-ribonucleotide + ATP + H(+) = diphosphate + NAD(+). The enzyme catalyses beta-nicotinamide D-riboside + ATP = beta-nicotinamide D-ribonucleotide + ADP + H(+). Its pathway is cofactor biosynthesis; NAD(+) biosynthesis [regulation]. The protein operates within cofactor biosynthesis; NAD(+) biosynthesis; NAD(+) from nicotinamide D-ribonucleotide: step 1/1. Feed-back regulated by NAD. At high levels of NAD the RN kinase activity is inhibited. In terms of biological role, this enzyme has two activities: nicotinamide mononucleotide (NMN) adenylyltransferase and ribosylnicotinamide (RN) kinase. The RN kinase activity catalyzes the phosphorylation of RN to form nicotinamide ribonucleotide. The NMN adenylyltransferase activity catalyzes the transfer of the AMP moiety of ATP to nicotinamide ribonucleotide to form NAD(+). This Haemophilus influenzae (strain ATCC 51907 / DSM 11121 / KW20 / Rd) protein is Bifunctional NAD biosynthesis protein NadR (nadR).